The primary structure comprises 452 residues: CASP-like protein 4A1 (452 aa).

Over residues 1–17 (MGLRDSLKEREDRRSSE) the composition is skewed to basic and acidic residues. Disordered regions lie at residues 1 to 39 (MGLR…RKES), 71 to 147 (RAGP…ARSS), and 164 to 283 (AKYV…VQFR). The Cytoplasmic segment spans residues 1–305 (MGLRDSLKER…KRRAAAMQRT (305 aa)). The span at 25–34 (SWMTRESTTG) shows a compositional bias: polar residues. Low complexity-rich tracts occupy residues 105 to 126 (QAQA…TGSG) and 190 to 205 (GWYS…AAPP). Over residues 211-272 (DPPPAPPRRQ…TAPAPAPVPA (62 aa)) the composition is skewed to pro residues. Residues 306-326 (ALLARGAAAGLCLAALAVLAA) form a helical membrane-spanning segment. Topologically, residues 327–347 (DTRKGWARDSYSNYTQFRYSE) are extracellular. N-linked (GlcNAc...) asparagine glycosylation occurs at Asn339. A helical transmembrane segment spans residues 348–368 (AVNVIGFIYSVFQFVALVELM). Over 369 to 389 (RRNKHLIPHPKRDLFDFTMDQ) the chain is Cytoplasmic. Residues 390 to 406 (VLTYLLISSSSSATARV) form a helical membrane-spanning segment. At 407 to 423 (SDLIDNWGSDPFPSMAN) the chain is on the extracellular side. Residue Asn423 is glycosylated (N-linked (GlcNAc...) asparagine). The chain crosses the membrane as a helical span at residues 424-444 (GSIAISFLAFAVFAICSLISA). Topologically, residues 445-452 (YNLFRRDV) are cytoplasmic.

This sequence belongs to the Casparian strip membrane proteins (CASP) family. As to quaternary structure, homodimer and heterodimers.

Its subcellular location is the cell membrane. The protein is CASP-like protein 4A1 of Sorghum bicolor (Sorghum).